Reading from the N-terminus, the 890-residue chain is Alanine--tRNA ligase (890 aa).

Positions 572, 576, 674, and 678 each coordinate Zn(2+).

Belongs to the class-II aminoacyl-tRNA synthetase family. Zn(2+) serves as cofactor.

The protein resides in the cytoplasm. It catalyses the reaction tRNA(Ala) + L-alanine + ATP = L-alanyl-tRNA(Ala) + AMP + diphosphate. Catalyzes the attachment of alanine to tRNA(Ala) in a two-step reaction: alanine is first activated by ATP to form Ala-AMP and then transferred to the acceptor end of tRNA(Ala). Also edits incorrectly charged Ser-tRNA(Ala) and Gly-tRNA(Ala) via its editing domain. This Prochlorococcus marinus (strain MIT 9211) protein is Alanine--tRNA ligase.